The chain runs to 208 residues: Thymidylate kinase (208 aa).

G9 to S16 lines the ATP pocket.

This sequence belongs to the thymidylate kinase family.

It catalyses the reaction dTMP + ATP = dTDP + ADP. Phosphorylation of dTMP to form dTDP in both de novo and salvage pathways of dTTP synthesis. The sequence is that of Thymidylate kinase from Dehalococcoides mccartyi (strain ATCC BAA-2100 / JCM 16839 / KCTC 5957 / BAV1).